Consider the following 457-residue polypeptide: Siroheme synthase (457 aa).

A precorrin-2 dehydrogenase /sirohydrochlorin ferrochelatase region spans residues 1–204 (MDHLPIFCQL…NDQKAITETT (204 aa)). NAD(+) is bound by residues 22 to 23 (DV) and 43 to 44 (LA). Ser128 is subject to Phosphoserine. The uroporphyrinogen-III C-methyltransferase stretch occupies residues 216–457 (GEVVLVGAGP…RDKLNWFSNH (242 aa)). Pro225 contributes to the S-adenosyl-L-methionine binding site. Asp248 functions as the Proton acceptor in the catalytic mechanism. Residue Lys270 is the Proton donor of the active site. Residues 301–303 (GGD), Ile306, 331–332 (TA), Met382, and Gly411 contribute to the S-adenosyl-L-methionine site.

In the N-terminal section; belongs to the precorrin-2 dehydrogenase / sirohydrochlorin ferrochelatase family. This sequence in the C-terminal section; belongs to the precorrin methyltransferase family.

The catalysed reaction is uroporphyrinogen III + 2 S-adenosyl-L-methionine = precorrin-2 + 2 S-adenosyl-L-homocysteine + H(+). The enzyme catalyses precorrin-2 + NAD(+) = sirohydrochlorin + NADH + 2 H(+). It catalyses the reaction siroheme + 2 H(+) = sirohydrochlorin + Fe(2+). It functions in the pathway cofactor biosynthesis; adenosylcobalamin biosynthesis; precorrin-2 from uroporphyrinogen III: step 1/1. Its pathway is cofactor biosynthesis; adenosylcobalamin biosynthesis; sirohydrochlorin from precorrin-2: step 1/1. The protein operates within porphyrin-containing compound metabolism; siroheme biosynthesis; precorrin-2 from uroporphyrinogen III: step 1/1. It participates in porphyrin-containing compound metabolism; siroheme biosynthesis; siroheme from sirohydrochlorin: step 1/1. It functions in the pathway porphyrin-containing compound metabolism; siroheme biosynthesis; sirohydrochlorin from precorrin-2: step 1/1. In terms of biological role, multifunctional enzyme that catalyzes the SAM-dependent methylations of uroporphyrinogen III at position C-2 and C-7 to form precorrin-2 via precorrin-1. Then it catalyzes the NAD-dependent ring dehydrogenation of precorrin-2 to yield sirohydrochlorin. Finally, it catalyzes the ferrochelation of sirohydrochlorin to yield siroheme. In Shigella flexneri, this protein is Siroheme synthase.